The chain runs to 337 residues: tRNA N6-adenosine threonylcarbamoyltransferase (337 aa).

The Fe cation site is built by His-110 and His-114. Residues 133–137, Asp-166, Gly-179, Asp-183, and Asn-276 contribute to the substrate site; that span reads MVSGG. Asp-302 contributes to the Fe cation binding site.

This sequence belongs to the KAE1 / TsaD family. The cofactor is Fe(2+).

It is found in the cytoplasm. The catalysed reaction is L-threonylcarbamoyladenylate + adenosine(37) in tRNA = N(6)-L-threonylcarbamoyladenosine(37) in tRNA + AMP + H(+). Functionally, required for the formation of a threonylcarbamoyl group on adenosine at position 37 (t(6)A37) in tRNAs that read codons beginning with adenine. Is involved in the transfer of the threonylcarbamoyl moiety of threonylcarbamoyl-AMP (TC-AMP) to the N6 group of A37, together with TsaE and TsaB. TsaD likely plays a direct catalytic role in this reaction. The polypeptide is tRNA N6-adenosine threonylcarbamoyltransferase (Fervidobacterium nodosum (strain ATCC 35602 / DSM 5306 / Rt17-B1)).